The primary structure comprises 393 residues: Formate-dependent phosphoribosylglycinamide formyltransferase (393 aa).

N(1)-(5-phospho-beta-D-ribosyl)glycinamide is bound by residues 22 to 23 (EL) and Glu82. ATP contacts are provided by residues Arg114, Lys155, 160–165 (SSGKGQ), 195–198 (EGFV), and Glu203. The ATP-grasp domain occupies 119-308 (RLAAEDLGIP…EFALHLRAIL (190 aa)). Positions 267 and 279 each coordinate Mg(2+). Residues Asp286, Lys356, and 363-364 (RR) each bind N(1)-(5-phospho-beta-D-ribosyl)glycinamide.

It belongs to the PurK/PurT family. In terms of assembly, homodimer.

It carries out the reaction N(1)-(5-phospho-beta-D-ribosyl)glycinamide + formate + ATP = N(2)-formyl-N(1)-(5-phospho-beta-D-ribosyl)glycinamide + ADP + phosphate + H(+). It functions in the pathway purine metabolism; IMP biosynthesis via de novo pathway; N(2)-formyl-N(1)-(5-phospho-D-ribosyl)glycinamide from N(1)-(5-phospho-D-ribosyl)glycinamide (formate route): step 1/1. Functionally, involved in the de novo purine biosynthesis. Catalyzes the transfer of formate to 5-phospho-ribosyl-glycinamide (GAR), producing 5-phospho-ribosyl-N-formylglycinamide (FGAR). Formate is provided by PurU via hydrolysis of 10-formyl-tetrahydrofolate. This Hydrogenovibrio crunogenus (strain DSM 25203 / XCL-2) (Thiomicrospira crunogena) protein is Formate-dependent phosphoribosylglycinamide formyltransferase.